The following is a 138-amino-acid chain: MSVVIDGKYLILKDRHYTETDEWILINGNIATVGITDYAQKKLKDIVGIELPQVGREVTIGEQVAVVESVKAAADIFSPLSGSVLEVNKELQSSPETINKDPYGRGWIFKLKIKDEKEVSKLLNFEQYIISIKQREGI.

Residues Ile-30–Lys-112 form the Lipoyl-binding domain. Residue Lys-71 is modified to N6-lipoyllysine.

The protein belongs to the GcvH family. As to quaternary structure, the glycine cleavage system is composed of four proteins: P, T, L and H. (R)-lipoate serves as cofactor.

Functionally, the glycine cleavage system catalyzes the degradation of glycine. The H protein shuttles the methylamine group of glycine from the P protein to the T protein. The polypeptide is Probable glycine cleavage system H protein 1 (Sulfolobus acidocaldarius (strain ATCC 33909 / DSM 639 / JCM 8929 / NBRC 15157 / NCIMB 11770)).